Reading from the N-terminus, the 215-residue chain is Ribose-5-phosphate isomerase A (215 aa).

Substrate contacts are provided by residues T26–T29, D79–D82, and K92–G95. The active-site Proton acceptor is the E101. K119 is a substrate binding site.

This sequence belongs to the ribose 5-phosphate isomerase family. Homodimer.

The enzyme catalyses aldehydo-D-ribose 5-phosphate = D-ribulose 5-phosphate. The protein operates within carbohydrate degradation; pentose phosphate pathway; D-ribose 5-phosphate from D-ribulose 5-phosphate (non-oxidative stage): step 1/1. Its function is as follows. Catalyzes the reversible conversion of ribose-5-phosphate to ribulose 5-phosphate. The protein is Ribose-5-phosphate isomerase A of Xanthomonas euvesicatoria pv. vesicatoria (strain 85-10) (Xanthomonas campestris pv. vesicatoria).